Reading from the N-terminus, the 302-residue chain is Surfeit locus protein 4 homolog (302 aa).

Helical transmembrane passes span 95 to 115 (APLLLFVCVVLMLVGSTLVVF), 120 to 140 (AYAIGSLLFVTLLQAFAYGLI), 193 to 213 (VLLIFMFLGLLAKEGSGISWT), 215 to 235 (ILVHILSVTACAMVVIGFKAK), 236 to 256 (FFAAVLVLILSVANFIINSFW), and 271 to 291 (DFFQTLSIVGGLLYLVNTGPG). The Di-lysine motif signature appears at 299–302 (KKIY).

This sequence belongs to the SURF4 family.

Its subcellular location is the endoplasmic reticulum membrane. The sequence is that of Surfeit locus protein 4 homolog from Schizosaccharomyces pombe (strain 972 / ATCC 24843) (Fission yeast).